A 182-amino-acid chain; its full sequence is NADH-quinone oxidoreductase subunit B 2 (182 aa).

The [4Fe-4S] cluster site is built by Cys-57, Cys-58, Cys-123, and Cys-153.

Belongs to the complex I 20 kDa subunit family. NDH-1 is composed of 14 different subunits. Subunits NuoB, C, D, E, F, and G constitute the peripheral sector of the complex. [4Fe-4S] cluster is required as a cofactor.

The protein resides in the cell membrane. The catalysed reaction is a quinone + NADH + 5 H(+)(in) = a quinol + NAD(+) + 4 H(+)(out). Its function is as follows. NDH-1 shuttles electrons from NADH, via FMN and iron-sulfur (Fe-S) centers, to quinones in the respiratory chain. The immediate electron acceptor for the enzyme in this species is believed to be a menaquinone. Couples the redox reaction to proton translocation (for every two electrons transferred, four hydrogen ions are translocated across the cytoplasmic membrane), and thus conserves the redox energy in a proton gradient. The chain is NADH-quinone oxidoreductase subunit B 2 from Symbiobacterium thermophilum (strain DSM 24528 / JCM 14929 / IAM 14863 / T).